The chain runs to 325 residues: D-alanine--D-alanine ligase (325 aa).

An ATP-grasp domain is found at 109–309 (KRVCKERMLP…FCTLLDQLIE (201 aa)). ATP is bound at residue 136–191 (CRRLPFPMFVKPANLGSSVGISKAHDEQELEAAFSLAKQYDRKIIVERGIEGRELE). Mg(2+) contacts are provided by D262, E276, and N278.

It belongs to the D-alanine--D-alanine ligase family. Mg(2+) is required as a cofactor. The cofactor is Mn(2+).

Its subcellular location is the cytoplasm. It catalyses the reaction 2 D-alanine + ATP = D-alanyl-D-alanine + ADP + phosphate + H(+). The protein operates within cell wall biogenesis; peptidoglycan biosynthesis. In terms of biological role, cell wall formation. In Solibacter usitatus (strain Ellin6076), this protein is D-alanine--D-alanine ligase.